Consider the following 563-residue polypeptide: 5-aminolevulinate synthase, mitochondrial (563 aa).

Residues 1–18 constitute a mitochondrion transit peptide; that stretch reads MESLVRQSKKLCPYIGRT. Residues Arg-137, Ser-251, and Lys-270 each contribute to the substrate site. Residues Ser-303, His-331, and Thr-373 each contribute to the pyridoxal 5'-phosphate site. Lys-376 is a catalytic residue. The residue at position 376 (Lys-376) is an N6-(pyridoxal phosphate)lysine. Pyridoxal 5'-phosphate-binding residues include Thr-405 and Thr-406. Position 491 (Thr-491) interacts with substrate.

The protein belongs to the class-II pyridoxal-phosphate-dependent aminotransferase family. In terms of assembly, homodimer. Pyridoxal 5'-phosphate is required as a cofactor.

The protein localises to the mitochondrion matrix. It catalyses the reaction succinyl-CoA + glycine + H(+) = 5-aminolevulinate + CO2 + CoA. Its pathway is porphyrin-containing compound metabolism; protoporphyrin-IX biosynthesis; 5-aminolevulinate from glycine: step 1/1. Its function is as follows. Catalyzes the synthesis of 5-aminolevulinate (ALA) from succinyl-CoA and glycine, the first and rate-limiting step in heme biosynthesis. The protein is 5-aminolevulinate synthase, mitochondrial (HEM1) of Yarrowia lipolytica (strain CLIB 122 / E 150) (Yeast).